The sequence spans 301 residues: Ribosomal RNA small subunit methyltransferase A (301 aa).

Asparagine 18, leucine 20, glycine 45, glutamate 66, aspartate 91, and asparagine 112 together coordinate S-adenosyl-L-methionine. Residues 267-301 are disordered; the sequence is PPEAAPVKEKRRMAKNKMTEPANNNLNENSAPEVD. Residues 287-301 show a composition bias toward polar residues; that stretch reads PANNNLNENSAPEVD.

It belongs to the class I-like SAM-binding methyltransferase superfamily. rRNA adenine N(6)-methyltransferase family. RsmA subfamily.

The protein resides in the cytoplasm. The catalysed reaction is adenosine(1518)/adenosine(1519) in 16S rRNA + 4 S-adenosyl-L-methionine = N(6)-dimethyladenosine(1518)/N(6)-dimethyladenosine(1519) in 16S rRNA + 4 S-adenosyl-L-homocysteine + 4 H(+). In terms of biological role, specifically dimethylates two adjacent adenosines (A1518 and A1519) in the loop of a conserved hairpin near the 3'-end of 16S rRNA in the 30S particle. May play a critical role in biogenesis of 30S subunits. This chain is Ribosomal RNA small subunit methyltransferase A, found in Colwellia psychrerythraea (strain 34H / ATCC BAA-681) (Vibrio psychroerythus).